A 599-amino-acid polypeptide reads, in one-letter code: MGEALNGLKRTMMCGEPREEHVGQKITLMGWVQRNRKLGGLDFIDLRDKTGIMQVVFGEEINAEAFEKAKGVRPEYCIAVTGEVVKRESVNENMPTGFVELKCQSLKILSESETPPIYIKENLDAAENIRLKYRYLDLRRPDMHRIFEIRSKTTKSIRDYLEKNDFLDVETPMLTKSTPEGARDYLVPSRNYPGMFYALPQSPQIFKQLLMVSGFDKYYQIVKCFRDEDLRANRQPEFTQVDMELSFVEQDDIMALNEGLIAHVFKEVAGVDVKLPIKRMTFKDAMEKYGSDKPDLRFGMEITNITEDVKDMDFVVFKSAIEAGGSVRALCLKGGAALGRKPLDKLGEFVKTYKAKGLAWIQLKEDGVKSSIAKFLTDDVTNSIIETMGAETGDAILIVADKESVVFQSLGALRLELAKQFELIKDKNEFNFTWITEFPLFEYSEEEERYTACHHPFTAPMEEDLDFLESAPGKVRSKAYDLVLNGEELGGGSIRIHDMELQQRMFKALGFTEEQAWERFGFLLQAFKFGPPPHGGLAFGLDRMIMFLAGTENIKDVIAFPKNQNAYCYLSEAPNIADEKQLTELGIGILPKQEKQEQE.

Glutamate 180 is a binding site for L-aspartate. The aspartate stretch occupies residues 204–207 (QIFK). Residue arginine 226 coordinates L-aspartate. Residues 226 to 228 (RDE) and glutamine 235 contribute to the ATP site. Histidine 454 serves as a coordination point for L-aspartate. Residue glutamate 488 coordinates ATP. Arginine 495 lines the L-aspartate pocket. Residue 540-543 (GLDR) coordinates ATP.

It belongs to the class-II aminoacyl-tRNA synthetase family. Type 1 subfamily. As to quaternary structure, homodimer.

The protein resides in the cytoplasm. It catalyses the reaction tRNA(Asp) + L-aspartate + ATP = L-aspartyl-tRNA(Asp) + AMP + diphosphate. Functionally, catalyzes the attachment of L-aspartate to tRNA(Asp) in a two-step reaction: L-aspartate is first activated by ATP to form Asp-AMP and then transferred to the acceptor end of tRNA(Asp). In Clostridium botulinum (strain Alaska E43 / Type E3), this protein is Aspartate--tRNA ligase.